The following is a 283-amino-acid chain: Pantothenate synthetase (283 aa).

Residue 30 to 37 participates in ATP binding; the sequence is MGNLHDGH. Histidine 37 serves as the catalytic Proton donor. Glutamine 61 contacts (R)-pantoate. Glutamine 61 provides a ligand contact to beta-alanine. 149–152 lines the ATP pocket; it reads GEKD. Glutamine 155 is a binding site for (R)-pantoate. ATP-binding positions include valine 178 and 186–189; that span reads LSSR.

This sequence belongs to the pantothenate synthetase family. As to quaternary structure, homodimer.

It localises to the cytoplasm. It catalyses the reaction (R)-pantoate + beta-alanine + ATP = (R)-pantothenate + AMP + diphosphate + H(+). The protein operates within cofactor biosynthesis; (R)-pantothenate biosynthesis; (R)-pantothenate from (R)-pantoate and beta-alanine: step 1/1. Its function is as follows. Catalyzes the condensation of pantoate with beta-alanine in an ATP-dependent reaction via a pantoyl-adenylate intermediate. This Salmonella arizonae (strain ATCC BAA-731 / CDC346-86 / RSK2980) protein is Pantothenate synthetase.